The following is a 255-amino-acid chain: tRNA (guanine-N(1)-)-methyltransferase (255 aa).

S-adenosyl-L-methionine is bound by residues Gly113 and 133–138 (IGDYVL).

This sequence belongs to the RNA methyltransferase TrmD family. Homodimer.

It localises to the cytoplasm. It catalyses the reaction guanosine(37) in tRNA + S-adenosyl-L-methionine = N(1)-methylguanosine(37) in tRNA + S-adenosyl-L-homocysteine + H(+). Functionally, specifically methylates guanosine-37 in various tRNAs. The protein is tRNA (guanine-N(1)-)-methyltransferase of Serratia proteamaculans (strain 568).